The chain runs to 625 residues: Probable inactive receptor kinase At5g16590 (625 aa).

The signal sequence occupies residues 1-23; sequence MKNKTNLGLSVFFFFICLVSVTS. LRR repeat units follow at residues 88–111, 112–134, 136–158, 160–182, and 183–204; these read KLETLSFRFNALNGPLPPDFANLT, LLRYLYLQGNAFSGEIPSFLFTL, NIIRINLAQNNFLGRIPDNVNSA, RLATLYLQDNQLTGPIPEIKIKL, and QQFNVSSNQLNGSIPDPLSGMP. The chain crosses the membrane as a helical span at residues 246–266; it reads AIVGIVIGCFVLLLVLFLIVF. A Protein kinase domain is found at 343-613; that stretch reads KASAEVLGKG…PEVTRLIEEV (271 aa). Position 345 is a phosphoserine (serine 345). ATP is bound by residues 349–357 and lysine 371; that span reads LGKGTFGSS. Serine 422 carries the post-translational modification Phosphoserine. Phosphothreonine occurs at positions 442 and 496. Serine 517 is modified (phosphoserine). Threonine 593 carries the post-translational modification Phosphothreonine. Serine 619 and serine 624 each carry phosphoserine.

Belongs to the protein kinase superfamily. Ser/Thr protein kinase family.

It is found in the cell membrane. Might be involved in early recognition of growth promoting fungi. Appears to be specific for P.indica. This Arabidopsis thaliana (Mouse-ear cress) protein is Probable inactive receptor kinase At5g16590.